We begin with the raw amino-acid sequence, 486 residues long: NADH-ubiquinone oxidoreductase chain 4 (486 aa).

13 consecutive transmembrane segments (helical) span residues 26–46 (HFYL…YINF), 76–96 (GLLF…VLLI), 113–132 (LYYT…FWAL), 134–156 (YISF…HIYG), 165–185 (FYVL…IVVI), 209–231 (IIWL…HVWL), 239–259 (PLAG…YAIL), 271–291 (ILYT…TSLA), 298–318 (LKVI…LGVC), 329–349 (IVLG…VGGI), 372–392 (LATY…TGNF), 407–427 (PIIG…QLKL), and 452–472 (FIMN…QIMY).

The protein belongs to the complex I subunit 4 family. As to quaternary structure, complex I is composed of 37 different subunits.

The protein resides in the mitochondrion membrane. The catalysed reaction is a ubiquinone + NADH + 5 H(+)(in) = a ubiquinol + NAD(+) + 4 H(+)(out). In terms of biological role, core subunit of the mitochondrial membrane respiratory chain NADH dehydrogenase (Complex I) that is believed to belong to the minimal assembly required for catalysis. Complex I functions in the transfer of electrons from NADH to the respiratory chain. The immediate electron acceptor for the enzyme is believed to be ubiquinone. This chain is NADH-ubiquinone oxidoreductase chain 4 (ND4), found in Yarrowia lipolytica (strain CLIB 122 / E 150) (Yeast).